We begin with the raw amino-acid sequence, 660 residues long: MTITRHARIDWDEQGNPRSRDFSDVYFSTESGLDETRHVFLVQNDLRRRFSELPEDGRLIIGETGFGTGLNFLCAWQLFDECAPAEARLQFVSVEKYPLSRADLQRALALWPELSRFARQLLDQYVAVHEGFQRLAFDDGRVTLTLLIGDALQMLPQLDGQIDAWFLDGFAPAKNPEMWTPELFAELARLSAPSATIGTFTSTGWVRRSLNAAGFKMKRVPGIGHKWEVLRGTFIAWPEDVAHPPAAKPWFARPAPIGGERKALVIGAGLAGCATAQSLAQRGWQVSLLERHAAPAQEASGNPQGVLYLKLSAHGTALSQLILSGFGHTRRLLERLQRGVDWDACGVLQLTFDDKEAQRQKQLADAFPESLLHLLDQPAAEAQSGVALNSGGLFYPEGGWVHPPALCHAQAAHANIRLIAHQQALELRRVDDQWQVWSDEQLIDSAPVVVLAGAADIQKFSQSADLPLKRIRGQITRLPQTQASAALRSVVCAEGYVAPARLGEHTLGASFDFNSTDLTPNLADHLGNLGLLREISEDLTSRLDTADLSPEQLQGRAAFRCTSPDYLPIVGPLADREAFLQAYAALGKDARQVPNIACPWLDGLYVNSGHGSRGLITAPLCGELIAAWVDNEPLPLPRSVAEACHPNRFALRGLIRGGGK.

The interval 1–235 is tRNA (mnm(5)s(2)U34)-methyltransferase; the sequence is MTITRHARID…KWEVLRGTFI (235 aa). The segment at 266–660 is FAD-dependent cmnm(5)s(2)U34 oxidoreductase; that stretch reads IGAGLAGCAT…LRGLIRGGGK (395 aa).

The protein in the N-terminal section; belongs to the methyltransferase superfamily. tRNA (mnm(5)s(2)U34)-methyltransferase family. In the C-terminal section; belongs to the DAO family. It depends on FAD as a cofactor.

It is found in the cytoplasm. The enzyme catalyses 5-aminomethyl-2-thiouridine(34) in tRNA + S-adenosyl-L-methionine = 5-methylaminomethyl-2-thiouridine(34) in tRNA + S-adenosyl-L-homocysteine + H(+). Its function is as follows. Catalyzes the last two steps in the biosynthesis of 5-methylaminomethyl-2-thiouridine (mnm(5)s(2)U) at the wobble position (U34) in tRNA. Catalyzes the FAD-dependent demodification of cmnm(5)s(2)U34 to nm(5)s(2)U34, followed by the transfer of a methyl group from S-adenosyl-L-methionine to nm(5)s(2)U34, to form mnm(5)s(2)U34. The protein is tRNA 5-methylaminomethyl-2-thiouridine biosynthesis bifunctional protein MnmC of Pseudomonas savastanoi pv. phaseolicola (strain 1448A / Race 6) (Pseudomonas syringae pv. phaseolicola (strain 1448A / Race 6)).